The following is a 681-amino-acid chain: Minichromosome maintenance domain-containing protein 2 (681 aa).

Residue Ser292 is modified to Phosphoserine. Residues Lys533–Ser621 form the MCM domain.

Functionally, plays an important role in meiotic recombination and associated DNA double-strand break repair. The sequence is that of Minichromosome maintenance domain-containing protein 2 (Mcmdc2) from Rattus norvegicus (Rat).